We begin with the raw amino-acid sequence, 698 residues long: MSPHNTCTLQITRALLSRLHILFHSALVASVFYYRFSNFSSGPAWALMTFAELTLAFIWALTQAFRWRPVVRAVFGPEEIDPAQLPGLDVFICTADPRKEPVMEVMNSVVSALALDYPAEKLAVYLSDDGGSPLTREVIREAAVFGKYWVGFCGKYNVKTRCPEAYFSSFCDGERVDHNQDYLNDELSVKSKFEAFKKYVQKASEDATKCIVVNDRPSCVEIIHDSKQNGEGEVKMPLLVYVAREKRPGFNHHAKAGAINTLLRVSGLLSNSPFFLVLDCDMYCNDPTSARQAMCFHLDPKLAPSLAFVQYPQIFYNTSKNDIYDGQARAAFKTKYQGMDGLRGPVMSGTGYFLKRKALYGKPHDQDELLREQPTKAFGSSKIFIASLGENTCVALKGLSKDELLQETQKLAACTYESNTLWGSEVGYSYDCLLESTYCGYLLHCKGWISVYLYPKKPCFLGCATVDMNDAMLQIMKWTSGLIGVGISKFSPFTYAMSRISIMQSLCYAYFAFSGLFAVFFLIYGVVLPYSLLQGVPLFPKAGDPWLLAFAGVFISSLLQHLYEVLSSGETVKAWWNEQRIWIIKSITACLFGLLDAMLNKIGVLKASFRLTNKAVDKQKLDKYEKGRFDFQGAQMFMVPLMILVVFNLVSFFGGLRRTVIHKNYEDMFAQLFLSLFILALSYPIMEEIVRKARKGRS.

Residues 14–34 (ALLSRLHILFHSALVASVFYY) traverse the membrane as a helical segment. N-linked (GlcNAc...) asparagine glycosylation occurs at Asn38. A helical transmembrane segment spans residues 42–62 (GPAWALMTFAELTLAFIWALT). UDP-alpha-D-glucose is bound by residues Lys99 and Glu100. Asp129 is an active-site residue. Asn317 carries N-linked (GlcNAc...) asparagine glycosylation. The active site involves Ser436. The next 6 helical transmembrane spans lie at 478-498 (WTSGLIGVGISKFSPFTYAMS), 508-528 (YAYFAFSGLFAVFFLIYGVVL), 546-566 (WLLAFAGVFISSLLQHLYEVL), 581-601 (IWIIKSITACLFGLLDAMLNK), 636-656 (MFMVPLMILVVFNLVSFFGGL), and 669-689 (FAQLFLSLFILALSYPIMEEI).

This sequence belongs to the glycosyltransferase 2 family. Plant cellulose synthase-like G subfamily. Mainly expressed in flowers and flower buds and, to a lesser extent, in leaves, stems and roots.

It localises to the golgi apparatus membrane. It functions in the pathway secondary metabolite biosynthesis; terpenoid biosynthesis. Functionally, component of the oleanane-type triterpene saponins (e.g. saponarioside A and saponarioside B) biosynthetic pathway, leading to the production of natural products with detergent properties used as traditional sources of soap. Glycosyltransferase that mediates the conversion of quillaic acid (QA) to QA-mono via the initiation of the C-3 sugar chain. The sequence is that of Quillaic acid 3-O-glycosyltransferase CSL1 from Saponaria officinalis (Common soapwort).